We begin with the raw amino-acid sequence, 107 residues long: Integration host factor subunit beta (107 aa).

Residues Pro78–Arg107 are disordered. Residues Pro82–Asp101 show a composition bias toward basic and acidic residues.

Belongs to the bacterial histone-like protein family. As to quaternary structure, heterodimer of an alpha and a beta chain.

Functionally, this protein is one of the two subunits of integration host factor, a specific DNA-binding protein that functions in genetic recombination as well as in transcriptional and translational control. The protein is Integration host factor subunit beta of Burkholderia multivorans (strain ATCC 17616 / 249).